A 212-amino-acid polypeptide reads, in one-letter code: MAIGLIGRKVGMTRIFNEDGASVPVTVIEIAANRVTQVRTLDTDGYRALQVTTGTKKANRITKPEAGHFAKAGVEAGRGLWEMRLADGEGEGIEVGAELNVDIFADIAKVDVTGQSKGKGFQGGIKRWNFATQDATHGNSLAHRANGSIGQNQTPGRVFKGKKMSGHMGAERVTTQNLEVIRVDAERNLLLVKGAVPGATNGDLIIKPAVKA.

Q153 carries the post-translational modification N5-methylglutamine.

Belongs to the universal ribosomal protein uL3 family. In terms of assembly, part of the 50S ribosomal subunit. Forms a cluster with proteins L14 and L19. Post-translationally, methylated by PrmB.

In terms of biological role, one of the primary rRNA binding proteins, it binds directly near the 3'-end of the 23S rRNA, where it nucleates assembly of the 50S subunit. The chain is Large ribosomal subunit protein uL3 from Shewanella pealeana (strain ATCC 700345 / ANG-SQ1).